A 1067-amino-acid polypeptide reads, in one-letter code: Eukaryotic translation initiation factor 3 subunit A (1067 aa).

A coiled-coil region spans residues Leu92 to Ala121. Positions Met339–Phe523 constitute a PCI domain. Residues Arg608–Ala899 adopt a coiled-coil conformation. Composition is skewed to basic and acidic residues over residues Ala617 to Arg632, Glu642 to Asp665, Glu795 to Arg901, and Ala916 to Ala926. 2 disordered regions span residues Ala617–Asp665 and Glu795–Gln1067. 2 stretches are compositionally biased toward low complexity: residues Ala965–Glu976 and Ser1025–Ser1046.

The protein belongs to the eIF-3 subunit A family. In terms of assembly, component of the eukaryotic translation initiation factor 3 (eIF-3) complex.

It localises to the cytoplasm. RNA-binding component of the eukaryotic translation initiation factor 3 (eIF-3) complex, which is involved in protein synthesis of a specialized repertoire of mRNAs and, together with other initiation factors, stimulates binding of mRNA and methionyl-tRNAi to the 40S ribosome. The eIF-3 complex specifically targets and initiates translation of a subset of mRNAs involved in cell proliferation. This Neosartorya fischeri (strain ATCC 1020 / DSM 3700 / CBS 544.65 / FGSC A1164 / JCM 1740 / NRRL 181 / WB 181) (Aspergillus fischerianus) protein is Eukaryotic translation initiation factor 3 subunit A (tif32).